Here is a 282-residue protein sequence, read N- to C-terminus: Complement component 1 Q subcomponent-binding protein, mitochondrial (282 aa).

The transit peptide at 1–70 (MLPLLRCVPR…PRGPCACGCG (70 aa)) directs the protein to the mitochondrion. Residues 76 to 93 (TEGDKAFVDFLNDEIKEE) are C1q binding. An N6-acetyllysine modification is found at Lys91. Residues 137–163 (NSIPPTFDGEEEPTQGQKVEEQEPELT) are disordered. An interaction with MAVS region spans residues 168-213 (FVVEVIKNDDGKKALVLDCHYPEDEVGQEDEAESDIFSIREVSFQS). Tyr188 carries the phosphotyrosine modification. Phosphoserine occurs at positions 201 and 205.

This sequence belongs to the MAM33 family. As to quaternary structure, homotrimer; three monomers form a donut-shaped structure with an unusually asymmetric charge distribution on the surface. Interacts with CDK13, HRK, VTN, NFYB, ADRA1B, FOXC1, DDX21, DDX50, NCL, SRSF1 and SRSF9. Interacts with CD93; the association may represent a cell surface C1q receptor. Interacts with KRT1; the association represents a cell surface kininogen receptor. Interacts with CD209; the interaction is indicative for a C1q:C1QBP:CD209 signaling complex. Interacts with FBL and RRP1; the respective interactions with C1QBP are competitive. Probably associates with the mitoribosome. Interacts with MAVS; the interaction occurs upon viral transfection. Interacts with PPIF. Interacts with U2AF1L4. Interacts with PLEKHN1. Interacts with VGF-derived peptide TLQP-21. Interacts with MRE11 and RAD50; forming the MRC (MRE11-RAD50-C1QBP) complex that inhibits the activity of MRE11. (Microbial infection) Interacts with Rubella virus capsid protein; the interaction occurs in mitochondria. In terms of assembly, (Microbial infection) Interacts with L.monocytogenes InlB.

It localises to the mitochondrion matrix. It is found in the nucleus. The protein resides in the cell membrane. Its subcellular location is the secreted. The protein localises to the cytoplasm. It localises to the nucleolus. Functionally, multifunctional and multicompartmental protein involved in inflammation and infection processes, ribosome biogenesis, protein synthesis in mitochondria, regulation of apoptosis, transcriptional regulation and pre-mRNA splicing. At the cell surface is thought to act as an endothelial receptor for plasma proteins of the complement and kallikrein-kinin cascades. Putative receptor for C1q; specifically binds to the globular 'heads' of C1q thus inhibiting C1; may perform the receptor function through a complex with C1qR/CD93. In complex with cytokeratin-1/KRT1 is a high affinity receptor for kininogen-1/HMWK. Can also bind other plasma proteins, such as coagulation factor XII leading to its autoactivation. May function to bind initially fluid kininogen-1 to the cell membrane. The secreted form may enhance both extrinsic and intrinsic coagulation pathways. It is postulated that the cell surface form requires docking with transmembrane proteins for downstream signaling which might be specific for a cell-type or response. By acting as C1q receptor is involved in chemotaxis of immature dendritic cells and neutrophils and is proposed to signal through CD209/DC-SIGN on immature dendritic cells, through integrin alpha-4/beta-1 during trophoblast invasion of the decidua, and through integrin beta-1 during endothelial cell adhesion and spreading. Signaling involved in inhibition of innate immune response is implicating the PI3K-AKT/PKB pathway. Required for protein synthesis in mitochondria. In mitochondrial translation may be involved in formation of functional 55S mitoribosomes; the function seems to involve its RNA-binding activity. Acts as a RNA modification reader, which specifically recognizes and binds mitochondrial RNAs modified by C5-methylcytosine (m5C) in response to stress, and promotes recruitment of the mitochondrial degradosome complex, leading to their degradation. May be involved in the nucleolar ribosome maturation process; the function may involve the exchange of FBL for RRP1 in the association with pre-ribosome particles. Involved in regulation of RNA splicing by inhibiting the RNA-binding capacity of SRSF1 and its phosphorylation. Is required for the nuclear translocation of splicing factor U2AF1L4. Involved in regulation of CDKN2A- and HRK-mediated apoptosis. Stabilizes mitochondrial CDKN2A isoform smARF. May be involved in regulation of FOXC1 transcriptional activity and NFY/CCAAT-binding factor complex-mediated transcription. May play a role in antibacterial defense as it can bind to cell surface hyaluronan and inhibit Streptococcus pneumoniae hyaluronate lyase. May be involved in modulation of the immune response; ligation by HCV core protein is resulting in suppression of interleukin-12 production in monocyte-derived dendritic cells. Involved in regulation of antiviral response by inhibiting RIGI- and IFIH1-mediated signaling pathways probably involving its association with MAVS after viral infection. Acts as a regulator of DNA repair via homologous recombination by inhibiting the activity of MRE11: interacts with unphosphorylated MRE11 and RAD50 in absence of DNA damage, preventing formation and activity of the MRN complex. Following DNA damage, dissociates from phosphorylated MRE11, allowing formation of the MRN complex. Its function is as follows. (Microbial infection) During bacterial infection processes acts as an attachment site for microbial proteins, including Listeria monocytogenes internalin B (InlB). This Chlorocebus aethiops (Green monkey) protein is Complement component 1 Q subcomponent-binding protein, mitochondrial (C1QBP).